The following is a 172-amino-acid chain: Protein GrpE (172 aa).

The span at 1–11 shows a compositional bias: low complexity; it reads MSEENNSQNSN. Positions 1–22 are disordered; the sequence is MSEENNSQNSNPPNPENGEIAS.

The protein belongs to the GrpE family. Homodimer.

The protein localises to the cytoplasm. Its function is as follows. Participates actively in the response to hyperosmotic and heat shock by preventing the aggregation of stress-denatured proteins, in association with DnaK and GrpE. It is the nucleotide exchange factor for DnaK and may function as a thermosensor. Unfolded proteins bind initially to DnaJ; upon interaction with the DnaJ-bound protein, DnaK hydrolyzes its bound ATP, resulting in the formation of a stable complex. GrpE releases ADP from DnaK; ATP binding to DnaK triggers the release of the substrate protein, thus completing the reaction cycle. Several rounds of ATP-dependent interactions between DnaJ, DnaK and GrpE are required for fully efficient folding. This chain is Protein GrpE, found in Bdellovibrio bacteriovorus (strain ATCC 15356 / DSM 50701 / NCIMB 9529 / HD100).